Consider the following 303-residue polypeptide: UDP-3-O-acyl-N-acetylglucosamine deacetylase (303 aa).

Positions 79, 238, and 242 each coordinate Zn(2+). H265 acts as the Proton donor in catalysis.

This sequence belongs to the LpxC family. It depends on Zn(2+) as a cofactor.

The enzyme catalyses a UDP-3-O-[(3R)-3-hydroxyacyl]-N-acetyl-alpha-D-glucosamine + H2O = a UDP-3-O-[(3R)-3-hydroxyacyl]-alpha-D-glucosamine + acetate. Its pathway is glycolipid biosynthesis; lipid IV(A) biosynthesis; lipid IV(A) from (3R)-3-hydroxytetradecanoyl-[acyl-carrier-protein] and UDP-N-acetyl-alpha-D-glucosamine: step 2/6. Functionally, catalyzes the hydrolysis of UDP-3-O-myristoyl-N-acetylglucosamine to form UDP-3-O-myristoylglucosamine and acetate, the committed step in lipid A biosynthesis. The protein is UDP-3-O-acyl-N-acetylglucosamine deacetylase of Pseudoalteromonas translucida (strain TAC 125).